A 391-amino-acid chain; its full sequence is Pyruvate dehydrogenase E1 component subunit alpha type II, mitochondrial (391 aa).

The transit peptide at 1–17 (SNIFKGPTVGSSVVAMS) directs the protein to the mitochondrion. Residues H83, Y109, R110, G148, G156, V158, D187, G188, A189, N216, and Y218 each contribute to the pyruvate site. 2 residues coordinate thiamine diphosphate: Y109 and R110. The thiamine diphosphate site is built by G156, V158, D187, G188, A189, and N216. Residue D187 participates in Mg(2+) binding. Residues N216 and Y218 each contribute to the Mg(2+) site. H283 is a thiamine diphosphate binding site. Phosphoserine occurs at positions 284 and 291.

Heterotetramer of two PDHA2 and two PDHB subunits. The heterotetramer interacts with DLAT, and is part of the multimeric pyruvate dehydrogenase complex that contains multiple copies of pyruvate dehydrogenase (E1), dihydrolipoamide acetyltransferase (DLAT, E2) and lipoamide dehydrogenase (DLD, E3). Thiamine diphosphate is required as a cofactor. It depends on Mg(2+) as a cofactor.

The protein localises to the mitochondrion matrix. It carries out the reaction N(6)-[(R)-lipoyl]-L-lysyl-[protein] + pyruvate + H(+) = N(6)-[(R)-S(8)-acetyldihydrolipoyl]-L-lysyl-[protein] + CO2. Its activity is regulated as follows. Pyruvate dehydrogenase activity is inhibited by phosphorylation of PDHA2; it is reactivated by dephosphorylation. The pyruvate dehydrogenase complex catalyzes the overall conversion of pyruvate to acetyl-CoA and CO(2), and thereby links the glycolytic pathway to the tricarboxylic cycle. This Ascaris suum (Pig roundworm) protein is Pyruvate dehydrogenase E1 component subunit alpha type II, mitochondrial.